The sequence spans 160 residues: 6,7-dimethyl-8-ribityllumazine synthase (160 aa).

5-amino-6-(D-ribitylamino)uracil-binding positions include F22, 57–59 (TYE), and 81–83 (TII). 86–87 (QT) contacts (2S)-2-hydroxy-3-oxobutyl phosphate. The Proton donor role is filled by H89. L114 is a 5-amino-6-(D-ribitylamino)uracil binding site. R128 lines the (2S)-2-hydroxy-3-oxobutyl phosphate pocket.

This sequence belongs to the DMRL synthase family. Forms an icosahedral capsid composed of 60 subunits, arranged as a dodecamer of pentamers.

It catalyses the reaction (2S)-2-hydroxy-3-oxobutyl phosphate + 5-amino-6-(D-ribitylamino)uracil = 6,7-dimethyl-8-(1-D-ribityl)lumazine + phosphate + 2 H2O + H(+). It participates in cofactor biosynthesis; riboflavin biosynthesis; riboflavin from 2-hydroxy-3-oxobutyl phosphate and 5-amino-6-(D-ribitylamino)uracil: step 1/2. Catalyzes the formation of 6,7-dimethyl-8-ribityllumazine by condensation of 5-amino-6-(D-ribitylamino)uracil with 3,4-dihydroxy-2-butanone 4-phosphate. This is the penultimate step in the biosynthesis of riboflavin. The chain is 6,7-dimethyl-8-ribityllumazine synthase from Buchnera aphidicola subsp. Acyrthosiphon pisum (strain Tuc7).